A 695-amino-acid polypeptide reads, in one-letter code: Methionine synthase reductase (695 aa).

In terms of domain architecture, Flavodoxin-like spans 4–147 (FLLLYATQRG…VVEPWINGLW (144 aa)). FMN-binding positions include 10 to 14 (TQRGQ) and 93 to 124 (LLGL…QRFY). Residues 166–245 (TLTMASHASR…ASLNIPSLPP (80 aa)) are hinge. Residues S171 and S187 each carry the phosphoserine modification. One can recognise an FAD-binding FR-type domain in the interval 269–531 (DPVFHVPVSK…PRTTNSFHLP (263 aa)). An NADP(+)-binding site is contributed by K289. FAD contacts are provided by residues 449–452 (RPYS) and 485–488 (GVCT). Residues 608–609 (SR), 622–624 (YVQ), and D657 each bind NADP(+). W695 is a binding site for FAD.

As to quaternary structure, forms a multiprotein complex with MMACHC, MMADHC and MTR. It depends on FAD as a cofactor. FMN is required as a cofactor.

It is found in the cytoplasm. It carries out the reaction 2 methylcob(III)alamin-[methionine synthase] + 2 S-adenosyl-L-homocysteine + NADP(+) + H(+) = 2 cob(II)alamin-[methionine synthase] + 2 S-adenosyl-L-methionine + NADPH. The catalysed reaction is 2 cob(II)alamin + A + 2 H2O + 2 H(+) = 2 aquacob(III)alamin + AH2. Key enzyme in methionine and folate homeostasis responsible for the reactivation of methionine synthase (MTR/MS) activity by catalyzing the reductive methylation of MTR-bound cob(II)alamin. Cobalamin (vitamin B12) forms a complex with MTR to serve as an intermediary in methyl transfer reactions that cycles between MTR-bound methylcob(III)alamin and MTR bound-cob(I)alamin forms, and occasional oxidative escape of the cob(I)alamin intermediate during the catalytic cycle leads to the inactive cob(II)alamin species. The processing of cobalamin in the cytosol occurs in a multiprotein complex composed of at least MMACHC, MMADHC, MTRR and MTR which may contribute to shuttle safely and efficiently cobalamin towards MTR in order to produce methionine. Also necessary for the utilization of methyl groups from the folate cycle, thereby affecting transgenerational epigenetic inheritance. Also acts as a molecular chaperone for methionine synthase by stabilizing apoMTR and incorporating methylcob(III)alamin into apoMTR to form the holoenzyme. Also serves as an aquacob(III)alamin reductase by reducing aquacob(III)alamin to cob(II)alamin; this reduction leads to stimulation of the conversion of apoMTR and aquacob(III)alamin to MTR holoenzyme. This is Methionine synthase reductase (MTRR) from Bos taurus (Bovine).